An 84-amino-acid chain; its full sequence is Figainin 2 (84 aa).

Positions 1–22 (MAFLKKSLFLVLFLGIVSLSVC) are cleaved as a signal peptide. Basic and acidic residues predominate over residues 23-39 (EEEKREGEEKEEKREEE). The segment at 23–53 (EEEKREGEEKEEKREEEEGKEENEDGNEEHK) is disordered. The propeptide occupies 23–54 (EEEKREGEEKEEKREEEEGKEENEDGNEEHKE). Over residues 40–49 (EGKEENEDGN) the composition is skewed to acidic residues.

As to expression, expressed by the skin glands.

It is found in the secreted. In terms of biological role, antimicrobial peptide that displays antibacterial, antiprotozoal, and antiviral activity. Exhibits antibacterial activity against the Gram-positive bacteria S.epidermidis ATCC 12228 (MIC=4 uM), E.casseliflavus ATCC 700327 (MIC=4 uM), S.aureus ATCC 25923 (MIC=8 uM) and E.faecalis ATCC 29212 (MIC=8 uM), and the Gram-negative bacteria E.coli ATCC 25922 (MIC=8 uM), K.pneumoniae ATCC 13883 (MIC=8 uM), the multi-resistant clinical isolate strain K.pneumoniae carbapanemase (KPC) MR (MIC=16 uM), and P.aeruginosa ATCC 27853 (MIC=32 uM). Displays antiprotozoal activity against the epimastigote form of T.cruzi (IC(50)=6.32 uM). Does not show antimicrobial against the fungi C.albicans ATCC 90028 and C.parapsilosis ATCC 22019. Displays antiviral activity against the human viruses chikungunya (EC(50)=17.9 uM), Dengue serotype 4 (EC(50)=20.8 uM) and Yellow Fever (EC(50)=21.8 uM). Shows moderate cytolytic activity against human erythrocytes (HC(50)=48.9 uM), and activates the oxidative burst in human neutrophils. Also displays anti-proliferative effects against MCF-7 breast cancer cells (IC(50)=15.3 uM) and B16F10 murine melanoma cells (IC(50)=12.8 uM). The sequence is that of Figainin 2 from Boana raniceps (Chaco tree frog).